A 684-amino-acid polypeptide reads, in one-letter code: Cleavage and polyadenylation specificity factor subunit 3 (684 aa).

An N-acetylserine modification is found at S2. H71, H73, D75, H76, H158, and D179 together coordinate Zn(2+). The Proton donor role is filled by H396. H418 contributes to the Zn(2+) binding site. Glycyl lysine isopeptide (Lys-Gly) (interchain with G-Cter in SUMO) cross-links involve residues K462, K465, and K545. At S659 the chain carries Phosphoserine. T681 bears the Phosphothreonine mark.

This sequence belongs to the metallo-beta-lactamase superfamily. RNA-metabolizing metallo-beta-lactamase-like family. CPSF3 subfamily. In terms of assembly, component of the cleavage and polyadenylation specificity factor (CPSF) complex, composed of CPSF1, CPSF2, CPSF3, CPSF4 and FIP1L1. Interacts with CPSF2, CSTF2 and SYMPK. Interacts with TUT1; the interaction is direct and mediates the recruitment of the CPSF complex on the 3'UTR of pre-mRNAs. Interacts with WDR33. Interacts with ZC3H3. Zn(2+) serves as cofactor. In terms of processing, sumoylated on Lys-462, Lys-465 and Lys-545, preferentially by SUMO3.

It localises to the nucleus. Functionally, component of the cleavage and polyadenylation specificity factor (CPSF) complex that plays a key role in pre-mRNA 3'-end formation, recognizing the AAUAAA signal sequence and interacting with poly(A) polymerase and other factors to bring about cleavage and poly(A) addition. Has endonuclease activity, and functions as an mRNA 3'-end-processing endonuclease. Also involved in the histone 3'-end pre-mRNA processing. U7 snRNP-dependent protein that induces both the 3'-endoribonucleolytic cleavage of histone pre-mRNAs and acts as a 5' to 3' exonuclease for degrading the subsequent downstream cleavage product (DCP) of mature histone mRNAs. Cleavage occurs after the 5'-ACCCA-3' sequence in the histone pre-mRNA leaving a 3'hydroxyl group on the upstream fragment containing the stem loop (SL) and 5' phosphate on the downstream cleavage product (DCP) starting with CU nucleotides. The U7-dependent 5' to 3' exonuclease activity is processive and degrades the DCP RNA substrate even after complete removal of the U7-binding site. Binds to the downstream cleavage product (DCP) of histone pre-mRNAs and the cleaved DCP RNA substrate in a U7 snRNP dependent manner. Required for entering/progressing through S-phase of the cell cycle. Required for the selective processing of microRNAs (miRNAs) during embryonic stem cell differentiation via its interaction with ISY1. Required for the biogenesis of all miRNAs from the pri-miR-17-92 primary transcript except miR-92a. Only required for the biogenesis of miR-290 and miR-96 from the pri-miR-290-295 and pri-miR-96-183 primary transcripts, respectively. The polypeptide is Cleavage and polyadenylation specificity factor subunit 3 (CPSF3) (Homo sapiens (Human)).